A 1141-amino-acid polypeptide reads, in one-letter code: Eukaryotic translation initiation factor 3 subunit A (1141 aa).

Residues L319–T501 form the PCI domain. Basic and acidic residues-rich tracts occupy residues Q588–E623 and A829–D899. 2 disordered regions span residues Q588–I631 and A829–R1141. S908 carries the post-translational modification Phosphoserine. Basic and acidic residues-rich tracts occupy residues E920–T976, S990–R1051, D1059–Q1087, and T1110–D1131.

This sequence belongs to the eIF-3 subunit A family. As to quaternary structure, component of the eukaryotic translation initiation factor 3 (eIF-3) complex. The eIF-3 complex interacts with pix.

The protein localises to the cytoplasm. In terms of biological role, RNA-binding component of the eukaryotic translation initiation factor 3 (eIF-3) complex, which is involved in protein synthesis of a specialized repertoire of mRNAs and, together with other initiation factors, stimulates binding of mRNA and methionyl-tRNAi to the 40S ribosome. The eIF-3 complex specifically targets and initiates translation of a subset of mRNAs involved in cell proliferation. The protein is Eukaryotic translation initiation factor 3 subunit A of Drosophila simulans (Fruit fly).